The primary structure comprises 451 residues: Eukaryotic translation initiation factor 5 (451 aa).

29–36 contacts GTP; that stretch reads GRGNGIKT. Disordered stretches follow at residues 143–233 and 263–299; these read LKNP…DDDV and STEETEKKMKQPTHKDGSTNGSAKEIPNDKPAVTKPS. Positions 147-178 are enriched in basic and acidic residues; it reads PEQKKGGKDKKAMRRAEKERLKEGEAADEEQK. The segment covering 179–188 has biased composition (basic residues); that stretch reads KLKKDAKKKG. Composition is skewed to basic and acidic residues over residues 208 to 226 and 266 to 279; these read DEDHSSSPTRSHDGDKAAA and ETEKKMKQPTHKDG. The W2 domain maps to 290–449; the sequence is NDKPAVTKPS…QSAESDEEGD (160 aa).

It belongs to the eIF-2-beta/eIF-5 family.

Functionally, catalyzes the hydrolysis of GTP bound to the 40S ribosomal initiation complex (40S.mRNA.Met-tRNA[F].eIF-2.GTP) with the subsequent joining of a 60S ribosomal subunit resulting in the release of eIF-2 and the guanine nucleotide. The subsequent joining of a 60S ribosomal subunit results in the formation of a functional 80S initiation complex (80S.mRNA.Met-tRNA[F]). The chain is Eukaryotic translation initiation factor 5 (EIF5) from Zea mays (Maize).